The chain runs to 183 residues: Dual-action ribosomal maturation protein DarP (183 aa).

The protein belongs to the DarP family.

It localises to the cytoplasm. Its function is as follows. Member of a network of 50S ribosomal subunit biogenesis factors which assembles along the 30S-50S interface, preventing incorrect 23S rRNA structures from forming. Promotes peptidyl transferase center (PTC) maturation. The sequence is that of Dual-action ribosomal maturation protein DarP from Salmonella arizonae (strain ATCC BAA-731 / CDC346-86 / RSK2980).